The following is a 954-amino-acid chain: Major inner capsid protein VP2 (954 aa).

The span at Met-1 to Lys-15 shows a compositional bias: basic and acidic residues. Positions Met-1–Ile-29 are disordered. Polar residues predominate over residues Gln-16–Ile-29.

It localises to the virion. Its function is as follows. Self-assembles to form an icosahedral capsid with a pseudo T=2 symmetry, about 60 nm in diameter, and consisting of 120 VP2 subunits. This chain is Major inner capsid protein VP2 (Segment-2), found in Banna virus (BAV).